Here is an 809-residue protein sequence, read N- to C-terminus: Bifunctional enzyme MurC/Ddl (809 aa).

Positions M1–K450 are UDP-N-acetylmuramate--alanine ligase. ATP-binding positions include G111–G117 and I606–I661. Residues K451 to R809 are D-alanine--D-alanine ligase. Residues K573–I784 enclose the ATP-grasp domain. D738, E751, and N753 together coordinate Mg(2+).

This sequence in the N-terminal section; belongs to the MurCDEF family. It in the C-terminal section; belongs to the D-alanine--D-alanine ligase family. The cofactor is Mg(2+). Mn(2+) serves as cofactor.

It is found in the cytoplasm. It carries out the reaction UDP-N-acetyl-alpha-D-muramate + L-alanine + ATP = UDP-N-acetyl-alpha-D-muramoyl-L-alanine + ADP + phosphate + H(+). It catalyses the reaction 2 D-alanine + ATP = D-alanyl-D-alanine + ADP + phosphate + H(+). The protein operates within cell wall biogenesis; peptidoglycan biosynthesis. Its function is as follows. Cell wall formation. The protein is Bifunctional enzyme MurC/Ddl (murC/ddl) of Chlamydia pneumoniae (Chlamydophila pneumoniae).